A 337-amino-acid polypeptide reads, in one-letter code: Glyceraldehyde-3-phosphate dehydrogenase (337 aa).

NAD(+) contacts are provided by residues 12-13 (RI), Asp-34, and Lys-79. D-glyceraldehyde 3-phosphate-binding positions include 150-152 (SCT), Thr-181, 210-211 (TG), and Arg-233. Cys-151 serves as the catalytic Nucleophile. Residue Asn-315 coordinates NAD(+).

Belongs to the glyceraldehyde-3-phosphate dehydrogenase family. In terms of assembly, homotetramer.

It localises to the cytoplasm. It carries out the reaction D-glyceraldehyde 3-phosphate + phosphate + NAD(+) = (2R)-3-phospho-glyceroyl phosphate + NADH + H(+). The protein operates within carbohydrate degradation; glycolysis; pyruvate from D-glyceraldehyde 3-phosphate: step 1/5. The polypeptide is Glyceraldehyde-3-phosphate dehydrogenase (GPD) (Phanerodontia chrysosporium (White-rot fungus)).